The chain runs to 302 residues: Sulfate adenylyltransferase subunit 2 (302 aa).

It belongs to the PAPS reductase family. CysD subfamily. As to quaternary structure, heterodimer composed of CysD, the smaller subunit, and CysN.

The enzyme catalyses sulfate + ATP + H(+) = adenosine 5'-phosphosulfate + diphosphate. Its pathway is sulfur metabolism; hydrogen sulfide biosynthesis; sulfite from sulfate: step 1/3. Its function is as follows. With CysN forms the ATP sulfurylase (ATPS) that catalyzes the adenylation of sulfate producing adenosine 5'-phosphosulfate (APS) and diphosphate, the first enzymatic step in sulfur assimilation pathway. APS synthesis involves the formation of a high-energy phosphoric-sulfuric acid anhydride bond driven by GTP hydrolysis by CysN coupled to ATP hydrolysis by CysD. The sequence is that of Sulfate adenylyltransferase subunit 2 from Escherichia coli O9:H4 (strain HS).